We begin with the raw amino-acid sequence, 109 residues long: Large ribosomal subunit protein uL22 (109 aa).

The protein belongs to the universal ribosomal protein uL22 family. Part of the 50S ribosomal subunit.

Functionally, this protein binds specifically to 23S rRNA; its binding is stimulated by other ribosomal proteins, e.g. L4, L17, and L20. It is important during the early stages of 50S assembly. It makes multiple contacts with different domains of the 23S rRNA in the assembled 50S subunit and ribosome. The globular domain of the protein is located near the polypeptide exit tunnel on the outside of the subunit, while an extended beta-hairpin is found that lines the wall of the exit tunnel in the center of the 70S ribosome. The chain is Large ribosomal subunit protein uL22 from Dehalococcoides mccartyi (strain ATCC BAA-2100 / JCM 16839 / KCTC 5957 / BAV1).